The sequence spans 64 residues: Large ribosomal subunit protein bL35 (64 aa).

Belongs to the bacterial ribosomal protein bL35 family.

The protein is Large ribosomal subunit protein bL35 of Vibrio atlanticus (strain LGP32) (Vibrio splendidus (strain Mel32)).